A 599-amino-acid chain; its full sequence is Cytochrome P450 monooxygenase ALT8 (599 aa).

2 consecutive transmembrane segments (helical) span residues 4 to 21 (LACV…VYLG) and 36 to 56 (ILFG…PAYF). A glycan (N-linked (GlcNAc...) asparagine) is linked at asparagine 127. Residues 495–504 (DDSSAASPSF) are compositionally biased toward low complexity. Residues 495-522 (DDSSAASPSFGGSGKRKSQYTDTHKEPS) are disordered. Cysteine 539 is a heme binding site.

Belongs to the cytochrome P450 family. It depends on heme as a cofactor.

The protein resides in the membrane. It functions in the pathway secondary metabolite biosynthesis. Its function is as follows. Cytochrome P450 monooxygenase; part of the gene cluster that mediates the biosynthesis of the host-selective toxins (HSTs) AAL-toxins, sphinganine-analog mycotoxins responsible for Alternaria stem canker on tomato by the tomato pathotype. The biosynthesis starts with the polyketide synthase ALT1-catalyzed C-16 carbon chain assembly from one starter acetyl-CoA unit with malonyl-CoA extender units. ALT1 also selectively transfers methyl groups at the first and the third cycle of chain elongation for AAL toxin. The C-16 polyketide chain is released from the enzyme by a nucleophilic attack of a carbanion, which is derived from R-carbon of glycin by decarboxylation, on the carbonyl carbon of polyketide acyl chain. This step is probably catalyzed by a pyridoxal 5'-phosphate-dependent aminoacyl transferase ALT4. The respective functions of the other enzymes encoded by the cluster have still to be elucidated. The sphingosine N-acyltransferase-like protein ALT7 seems not to act as a resistance/self-tolerance factor against the toxin in the toxin biosynthetic gene cluster, contrary to what is expected. This chain is Cytochrome P450 monooxygenase ALT8, found in Alternaria alternata (Alternaria rot fungus).